Reading from the N-terminus, the 262-residue chain is Light-harvesting complex-like protein 3 isotype 1, chloroplastic (262 aa).

The N-terminal 39 residues, 1 to 39 (MALFSPPISSSSLQNPNFIPKFSFSLLSSNRFSLLSVTR), are a transit peptide targeting the chloroplast. 2 helical membrane passes run 180–200 (AAMI…VGLV) and 202–222 (QMGN…VLFI).

In terms of assembly, interacts with GGR. Forms homodimer, and heterodimer with LIL3.2. In terms of tissue distribution, expressed in photosynthetically active tissues (at protein level).

The protein resides in the plastid. It is found in the chloroplast thylakoid membrane. Light-harvesting-like protein required for biosynthesis of phytylated chlorophylls and alpha-tocopherol in green seedlings. Functions by anchoring geranylgeranyl reductase (GGR) in the thylakoid membrane, leading to the stabilization of GGR activity. Binds chlorophyll a in the thylakoid membrane. Plays a role in the regulation of chlorophyll biosynthesis under light stress and under standard growth conditions. The polypeptide is Light-harvesting complex-like protein 3 isotype 1, chloroplastic (LIL3.1) (Arabidopsis thaliana (Mouse-ear cress)).